A 158-amino-acid polypeptide reads, in one-letter code: MKLNEIKDNEGSTHSRKRLGRGIGSGSGKTGGRGVKGQKSRSGVAINGFEGGQMPIYRRLPKRGFNNIFASDFVVVSLARIQTAIDAGKLDAKTTVDAAALKAAGVIRRVKDGVRVLADGEIKAKITIVVAGASKPAVEKIEKAGGTVTLLSAPAAAE.

Positions 1–13 (MKLNEIKDNEGST) are enriched in basic and acidic residues. The interval 1–45 (MKLNEIKDNEGSTHSRKRLGRGIGSGSGKTGGRGVKGQKSRSGVA) is disordered. The segment covering 21–35 (RGIGSGSGKTGGRGV) has biased composition (gly residues).

This sequence belongs to the universal ribosomal protein uL15 family. In terms of assembly, part of the 50S ribosomal subunit.

Its function is as follows. Binds to the 23S rRNA. The chain is Large ribosomal subunit protein uL15 from Rhizobium johnstonii (strain DSM 114642 / LMG 32736 / 3841) (Rhizobium leguminosarum bv. viciae).